A 438-amino-acid chain; its full sequence is DNA primase DnaG (438 aa).

Positions 171–245 constitute a Toprim domain; sequence DAILVVEGRA…DIDYVARAPE (75 aa). 3 residues coordinate Mg(2+): glutamate 177, aspartate 219, and aspartate 221.

This sequence belongs to the archaeal DnaG primase family. Forms a ternary complex with MCM helicase and DNA. Component of the archaeal exosome complex. Requires Mg(2+) as cofactor.

It carries out the reaction ssDNA + n NTP = ssDNA/pppN(pN)n-1 hybrid + (n-1) diphosphate.. In terms of biological role, RNA polymerase that catalyzes the synthesis of short RNA molecules used as primers for DNA polymerase during DNA replication. Also part of the exosome, which is a complex involved in RNA degradation. Acts as a poly(A)-binding protein that enhances the interaction between heteromeric, adenine-rich transcripts and the exosome. The sequence is that of DNA primase DnaG from Methanothrix thermoacetophila (strain DSM 6194 / JCM 14653 / NBRC 101360 / PT) (Methanosaeta thermophila).